A 367-amino-acid chain; its full sequence is Inner membrane amino-acid ABC transporter permease protein YhdY (367 aa).

The Cytoplasmic segment spans residues 1–36 (MTKVLLSHPPRPASHNSSRAMVWVRKNLFSSWSNSL). The helical transmembrane segment at 37-57 (LTIGCIWLMWELIPPLLNWAF) threads the bilayer. At 58–99 (LQANWVGSTRADCTKAGACWVFIHERFGQFMYGLYPHDQRWR) the chain is on the periplasmic side. A helical membrane pass occupies residues 100 to 120 (INLALLIGLVSIAPMFWKILP). Residues 121 to 125 (HRGRY) are Cytoplasmic-facing. The helical transmembrane segment at 126–146 (IAAWAVIYPLIVWWLMYGGFF) threads the bilayer. Residues 147–162 (ALERVETRQWGGLTLT) lie on the Periplasmic side of the membrane. The ABC transmembrane type-1 domain maps to 159 to 353 (LTLTLIIASV…IFCFSMSRYS (195 aa)). Residues 163-183 (LIIASVGIAGALPWGILLALG) traverse the membrane as a helical segment. Over 184 to 192 (RRSHMPIVR) the chain is Cytoplasmic. The chain crosses the membrane as a helical span at residues 193–213 (ILSVIFIEFWRGVPLITVLFM). The Periplasmic segment spans residues 214–233 (SSVMLPLFMAEGTSIDKLIR). A helical membrane pass occupies residues 234–254 (ALVGVILFQSAYVAEVVRGGL). The Cytoplasmic portion of the chain corresponds to 255–291 (QALPKGQYEAAESLALGYWKTQGLVILPQALKLVIPG). The chain crosses the membrane as a helical span at residues 292–312 (LVNTIIALFKDTSLVIIIGLF). Over 313 to 326 (DLFSSVQQATVDPA) the chain is Periplasmic. Residues 327 to 347 (WLGMSTEGYVFAALIYWIFCF) traverse the membrane as a helical segment. Over 348-367 (SMSRYSQYLEKRFNTGRTPH) the chain is Cytoplasmic.

This sequence belongs to the binding-protein-dependent transport system permease family. HisMQ subfamily.

It is found in the cell inner membrane. Functionally, probably part of the binding-protein-dependent transport system YdhWXYZ for an amino acid; probably responsible for the translocation of the substrate across the membrane. The chain is Inner membrane amino-acid ABC transporter permease protein YhdY (yhdY) from Escherichia coli (strain K12).